The following is a 267-amino-acid chain: 4-hydroxy-tetrahydrodipicolinate reductase (267 aa).

NAD(+) is bound by residues 9-14 (GAAGRM) and Asp-35. Arg-36 lines the NADP(+) pocket. Residues 99 to 101 (GTT) and 123 to 126 (APNY) contribute to the NAD(+) site. His-156 functions as the Proton donor/acceptor in the catalytic mechanism. His-157 lines the (S)-2,3,4,5-tetrahydrodipicolinate pocket. Lys-160 (proton donor) is an active-site residue. 166 to 167 (GT) is a binding site for (S)-2,3,4,5-tetrahydrodipicolinate.

Belongs to the DapB family.

Its subcellular location is the cytoplasm. It carries out the reaction (S)-2,3,4,5-tetrahydrodipicolinate + NAD(+) + H2O = (2S,4S)-4-hydroxy-2,3,4,5-tetrahydrodipicolinate + NADH + H(+). The catalysed reaction is (S)-2,3,4,5-tetrahydrodipicolinate + NADP(+) + H2O = (2S,4S)-4-hydroxy-2,3,4,5-tetrahydrodipicolinate + NADPH + H(+). It functions in the pathway amino-acid biosynthesis; L-lysine biosynthesis via DAP pathway; (S)-tetrahydrodipicolinate from L-aspartate: step 4/4. Functionally, catalyzes the conversion of 4-hydroxy-tetrahydrodipicolinate (HTPA) to tetrahydrodipicolinate. The chain is 4-hydroxy-tetrahydrodipicolinate reductase from Alkalilimnicola ehrlichii (strain ATCC BAA-1101 / DSM 17681 / MLHE-1).